The primary structure comprises 92 residues: UPF0250 protein Pmen_3793 (92 aa).

Belongs to the UPF0250 family.

This is UPF0250 protein Pmen_3793 from Ectopseudomonas mendocina (strain ymp) (Pseudomonas mendocina).